The following is a 436-amino-acid chain: Mitochondrial distribution and morphology protein 12 (436 aa).

An SMP-LTD domain is found at 1–436 (MSIEVNWGTA…VFPSFYTFLI (436 aa)). Over residues 73–84 (DEDGDSGSEISE) the composition is skewed to acidic residues. 3 disordered regions span residues 73 to 98 (DEDG…WDRT), 184 to 275 (AVAG…RMRE), and 352 to 380 (GSGS…PHQK). Over residues 85–98 (ELQHRTHDNPWDRT) the composition is skewed to basic and acidic residues. Composition is skewed to polar residues over residues 190–206 (PFTT…QGNK) and 222–243 (DSSN…SNRS). Basic and acidic residues predominate over residues 244-255 (SHPDGHPEHNDD). Over residues 256-267 (PISSSENPLLQN) the composition is skewed to polar residues.

Belongs to the MDM12 family. In terms of assembly, component of the ER-mitochondria encounter structure (ERMES) or MDM complex, composed of mmm1, mdm10, mdm12 and mdm34. A mmm1 homodimer associates with one molecule of mdm12 on each side in a pairwise head-to-tail manner, and the SMP-LTD domains of mmm1 and mdm12 generate a continuous hydrophobic tunnel for phospholipid trafficking.

It localises to the mitochondrion outer membrane. The protein localises to the endoplasmic reticulum membrane. In terms of biological role, component of the ERMES/MDM complex, which serves as a molecular tether to connect the endoplasmic reticulum (ER) and mitochondria. Components of this complex are involved in the control of mitochondrial shape and protein biogenesis, and function in nonvesicular lipid trafficking between the ER and mitochondria. Mdm12 is required for the interaction of the ER-resident membrane protein mmm1 and the outer mitochondrial membrane-resident beta-barrel protein mdm10. The mdm12-mmm1 subcomplex functions in the major beta-barrel assembly pathway that is responsible for biogenesis of all mitochondrial outer membrane beta-barrel proteins, and acts in a late step after the SAM complex. The mdm10-mdm12-mmm1 subcomplex further acts in the TOM40-specific pathway after the action of the mdm12-mmm1 complex. Essential for establishing and maintaining the structure of mitochondria and maintenance of mtDNA nucleoids. This Emericella nidulans (strain FGSC A4 / ATCC 38163 / CBS 112.46 / NRRL 194 / M139) (Aspergillus nidulans) protein is Mitochondrial distribution and morphology protein 12.